The following is a 468-amino-acid chain: 3-isopropylmalate dehydratase large subunit (468 aa).

3 residues coordinate [4Fe-4S] cluster: cysteine 346, cysteine 406, and cysteine 409.

It belongs to the aconitase/IPM isomerase family. LeuC type 1 subfamily. Heterodimer of LeuC and LeuD. [4Fe-4S] cluster serves as cofactor.

It catalyses the reaction (2R,3S)-3-isopropylmalate = (2S)-2-isopropylmalate. It functions in the pathway amino-acid biosynthesis; L-leucine biosynthesis; L-leucine from 3-methyl-2-oxobutanoate: step 2/4. In terms of biological role, catalyzes the isomerization between 2-isopropylmalate and 3-isopropylmalate, via the formation of 2-isopropylmaleate. This Cyanothece sp. (strain PCC 7425 / ATCC 29141) protein is 3-isopropylmalate dehydratase large subunit.